A 433-amino-acid polypeptide reads, in one-letter code: Adenylosuccinate synthetase (433 aa).

GTP is bound by residues 11–17 (GDEGKGK) and 39–41 (GHT). Asp-12 acts as the Proton acceptor in catalysis. Positions 12 and 39 each coordinate Mg(2+). IMP is bound by residues 12–15 (DEGK), 37–40 (NAGH), Thr-134, Arg-148, Asn-230, Thr-245, and Arg-309. His-40 acts as the Proton donor in catalysis. 305–311 (VTTGRKR) contacts substrate. GTP-binding positions include Arg-311, 337 to 339 (KLD), and 419 to 421 (GTG).

This sequence belongs to the adenylosuccinate synthetase family. In terms of assembly, homodimer. The cofactor is Mg(2+).

It localises to the cytoplasm. The enzyme catalyses IMP + L-aspartate + GTP = N(6)-(1,2-dicarboxyethyl)-AMP + GDP + phosphate + 2 H(+). It participates in purine metabolism; AMP biosynthesis via de novo pathway; AMP from IMP: step 1/2. Functionally, plays an important role in the de novo pathway and in the salvage pathway of purine nucleotide biosynthesis. Catalyzes the first committed step in the biosynthesis of AMP from IMP. The protein is Adenylosuccinate synthetase of Saccharomyces cerevisiae (strain YJM789) (Baker's yeast).